The primary structure comprises 817 residues: Actin filament-associated protein 1-like 2 (817 aa).

Tyrosine 56 carries the post-translational modification Phosphotyrosine. Positions 63-164 (HKQQNAESQD…KGKSAPHQWP (102 aa)) are disordered. Over residues 123 to 139 (YYEEAEPYDTSLNEDGE) the composition is skewed to acidic residues. PH domains follow at residues 175 to 271 (DARI…EVSG) and 353 to 447 (SLET…SESG). A Phosphoserine modification is found at serine 408. A Phosphotyrosine modification is found at tyrosine 413. Residue serine 484 is modified to Phosphoserine. A compositionally biased stretch (low complexity) spans 512 to 528 (TTAGEAPEEATPATDAP). Disordered regions lie at residues 512-657 (TTAG…KLGK) and 754-786 (GTTV…VNSA). Residues 652–748 (EIKLGKNRTE…VKDSLRKAEA (97 aa)) adopt a coiled-coil conformation. The segment covering 754 to 763 (GTTVDTTHLE) has biased composition (polar residues). Residues 767–782 (PRPKAATPTPAPDCTP) show a composition bias toward low complexity.

In terms of assembly, interacts with SRC. Interacts with LCK when tyrosine phosphorylated. In terms of processing, tyrosine phosphorylated (by SRC).

It localises to the cytoplasm. Functionally, may play a role in a signaling cascade by enhancing the kinase activity of SRC. Contributes to SRC-regulated transcription activation. The chain is Actin filament-associated protein 1-like 2 (AFAP1L2) from Bos taurus (Bovine).